We begin with the raw amino-acid sequence, 105 residues long: N(4)-acetylcytidine amidohydrolase (105 aa).

Residues 7–93 (TFFERFEHDI…VIAEIYPGLE (87 aa)) enclose the ASCH domain. Lys-21 functions as the Proton acceptor in the catalytic mechanism. Catalysis depends on Thr-24, which acts as the Nucleophile. Glu-74 (proton donor) is an active-site residue.

Belongs to the N(4)-acetylcytidine amidohydrolase family.

The enzyme catalyses N(4)-acetylcytidine + H2O = cytidine + acetate + H(+). The catalysed reaction is N(4)-acetyl-2'-deoxycytidine + H2O = 2'-deoxycytidine + acetate + H(+). It carries out the reaction N(4)-acetylcytosine + H2O = cytosine + acetate + H(+). Its function is as follows. Catalyzes the hydrolysis of N(4)-acetylcytidine (ac4C). The sequence is that of N(4)-acetylcytidine amidohydrolase from Shewanella baltica (strain OS185).